A 249-amino-acid polypeptide reads, in one-letter code: Ribosomal RNA small subunit methyltransferase J (249 aa).

S-adenosyl-L-methionine-binding positions include Arg-101–Asp-102, Glu-117–Arg-118, and Asp-171.

This sequence belongs to the methyltransferase superfamily. RsmJ family.

It is found in the cytoplasm. The catalysed reaction is guanosine(1516) in 16S rRNA + S-adenosyl-L-methionine = N(2)-methylguanosine(1516) in 16S rRNA + S-adenosyl-L-homocysteine + H(+). In terms of biological role, specifically methylates the guanosine in position 1516 of 16S rRNA. The chain is Ribosomal RNA small subunit methyltransferase J from Tolumonas auensis (strain DSM 9187 / NBRC 110442 / TA 4).